The chain runs to 100 residues: uncharacterized protein (100 aa).

Residues 1-26 form the signal peptide; sequence MKRLLVSLRVWMVFLMNWVTPDRKTA.

This is an uncharacterized protein from Bacillus subtilis (strain 168).